A 338-amino-acid polypeptide reads, in one-letter code: Ferrochelatase (338 aa).

Residues H210 and E291 each contribute to the Fe cation site.

This sequence belongs to the ferrochelatase family.

It is found in the cytoplasm. The enzyme catalyses heme b + 2 H(+) = protoporphyrin IX + Fe(2+). The protein operates within porphyrin-containing compound metabolism; protoheme biosynthesis; protoheme from protoporphyrin-IX: step 1/1. Catalyzes the ferrous insertion into protoporphyrin IX. This Helicobacter acinonychis (strain Sheeba) protein is Ferrochelatase.